The following is a 121-amino-acid chain: Small ribosomal subunit protein uS13 (121 aa).

A disordered region spans residues 93–121; sequence RKGLPVRGQKTKTNARTRKGKRKTVGAKS.

The protein belongs to the universal ribosomal protein uS13 family. In terms of assembly, part of the 30S ribosomal subunit. Forms a loose heterodimer with protein S19. Forms two bridges to the 50S subunit in the 70S ribosome.

Located at the top of the head of the 30S subunit, it contacts several helices of the 16S rRNA. In the 70S ribosome it contacts the 23S rRNA (bridge B1a) and protein L5 of the 50S subunit (bridge B1b), connecting the 2 subunits; these bridges are implicated in subunit movement. Contacts the tRNAs in the A and P-sites. The polypeptide is Small ribosomal subunit protein uS13 (Campylobacter lari (strain RM2100 / D67 / ATCC BAA-1060)).